The following is a 266-amino-acid chain: tRNA pseudouridine synthase A (266 aa).

The active-site Nucleophile is the Asp-56. Tyr-110 is a substrate binding site.

It belongs to the tRNA pseudouridine synthase TruA family.

The catalysed reaction is uridine(38/39/40) in tRNA = pseudouridine(38/39/40) in tRNA. Functionally, formation of pseudouridine at positions 38, 39 and 40 in the anticodon stem and loop of transfer RNAs. In Halobacterium salinarum (strain ATCC 29341 / DSM 671 / R1), this protein is tRNA pseudouridine synthase A.